The chain runs to 242 residues: NADPH-dependent pterin aldehyde reductase (242 aa).

Thr-2 is modified (N-acetylthreonine). Residue 21-50 coordinates NADP(+); that stretch reads LITGVSKGLGRALALELAKRGHTVIGCARS. Residue Ser-153 participates in substrate binding. Tyr-166 functions as the Proton acceptor in the catalytic mechanism. Lys-170 lines the NADP(+) pocket.

The protein belongs to the short-chain dehydrogenases/reductases (SDR) family. Homodimer. As to expression, mostly expressed in seeds, and, to a lower extent, in roots, leaves, flowers and siliques.

The protein localises to the cytoplasm. In terms of biological role, NADPH-dependent pterin aldehyde reductase involved in pterin aldehyde salvage during folate turnover. Catalyzes the reduction of diverse aromatic and aliphatic aldehydes (e.g. acetaldehyde, n-propanal, 1-naphthaldehyde, benzaldehyde, cinnamaldehyde, n-butanal, n-hexanal, n-pentanal, 2-naphthaldehyde, n-octanal, n-nonanal and n-heptanal), in addition to the conversion of pterin-6-aldehyde (PtCHO) to 6-hydroxymethylpterin (PtCH(2)OH), and the conversion of dihydropterin-6-aldehyde (H(2)PtCHO) to 6-hydroxymethyldihydropterin (H(2)PtCH(2)OH). Cannot reduce the pterin ring. This is NADPH-dependent pterin aldehyde reductase from Arabidopsis thaliana (Mouse-ear cress).